A 431-amino-acid chain; its full sequence is Na(+)-translocating NADH-quinone reductase subunit F (431 aa).

A helical transmembrane segment spans residues 10–30 (IFIASTAFCALGLLLVAIILL). A 2Fe-2S ferredoxin-type domain is found at 41 to 133 (CKLRINNDDS…DMNLEIEERY (93 aa)). [2Fe-2S] cluster is bound by residues C76, C82, C85, and C117. In terms of domain architecture, FAD-binding FR-type spans 136–286 (ASSWEGTVVS…SGPYGESFMK (151 aa)). Residues 289–413 (NRPVIFLIGG…ALHNSSILTL (125 aa)) form a catalytic region.

It belongs to the NqrF family. In terms of assembly, composed of six subunits; NqrA, NqrB, NqrC, NqrD, NqrE and NqrF. It depends on [2Fe-2S] cluster as a cofactor. Requires FAD as cofactor.

The protein resides in the cell inner membrane. The enzyme catalyses a ubiquinone + n Na(+)(in) + NADH + H(+) = a ubiquinol + n Na(+)(out) + NAD(+). Functionally, NQR complex catalyzes the reduction of ubiquinone-1 to ubiquinol by two successive reactions, coupled with the transport of Na(+) ions from the cytoplasm to the periplasm. The first step is catalyzed by NqrF, which accepts electrons from NADH and reduces ubiquinone-1 to ubisemiquinone by a one-electron transfer pathway. The chain is Na(+)-translocating NADH-quinone reductase subunit F from Chlamydia muridarum (strain MoPn / Nigg).